Reading from the N-terminus, the 284-residue chain is Cytochrome P450 2C31 (284 aa).

C229 contacts heme.

Belongs to the cytochrome P450 family. Heme is required as a cofactor.

The protein resides in the endoplasmic reticulum membrane. It is found in the microsome membrane. It catalyses the reaction an organic molecule + reduced [NADPH--hemoprotein reductase] + O2 = an alcohol + oxidized [NADPH--hemoprotein reductase] + H2O + H(+). Functionally, cytochromes P450 are a group of heme-thiolate monooxygenases. In liver microsomes, this enzyme is involved in an NADPH-dependent electron transport pathway. It oxidizes a variety of structurally unrelated compounds, including steroids, fatty acids, and xenobiotics. This Capra hircus aegagrus (Wild goat) protein is Cytochrome P450 2C31 (CYP2C31).